Consider the following 237-residue polypeptide: rRNA-processing protein EFG1 (237 aa).

A disordered region spans residues methionine 1–glutamate 24. Coiled-coil stretches lie at residues aspartate 53 to threonine 113 and leucine 166 to glutamate 186. The interval asparagine 206 to glutamate 237 is disordered. Residues glutamine 228–glutamate 237 show a composition bias toward acidic residues.

This sequence belongs to the EFG1 family.

It localises to the nucleus. Its subcellular location is the nucleolus. Functionally, involved in rRNA processing. The polypeptide is rRNA-processing protein EFG1 (Candida albicans (strain SC5314 / ATCC MYA-2876) (Yeast)).